We begin with the raw amino-acid sequence, 285 residues long: 2-hydroxy-6-oxononadienedioate/2-hydroxy-6-oxononatrienedioate hydrolase 1 (285 aa).

Catalysis depends on His265, which acts as the Proton acceptor.

This sequence belongs to the AB hydrolase superfamily. MhpC family. As to quaternary structure, homodimer.

The catalysed reaction is (2Z,4E)-2-hydroxy-6-oxonona-2,4-dienedioate + H2O = (2Z)-2-hydroxypenta-2,4-dienoate + succinate + H(+). It carries out the reaction (2Z,4E,7E)-2-hydroxy-6-oxonona-2,4,7-trienedioate + H2O = (2Z)-2-hydroxypenta-2,4-dienoate + fumarate + H(+). Its pathway is aromatic compound metabolism; 3-phenylpropanoate degradation. Its function is as follows. Catalyzes the cleavage of the C5-C6 bond of 2-hydroxy-6-oxononadienedioate and 2-hydroxy-6-oxononatrienedioate, a dienol ring fission product of the bacterial meta-cleavage pathway for degradation of phenylpropionic acid. The protein is 2-hydroxy-6-oxononadienedioate/2-hydroxy-6-oxononatrienedioate hydrolase 1 of Pseudomonas putida (Arthrobacter siderocapsulatus).